Reading from the N-terminus, the 540-residue chain is MTTPAGSGRGFGSVSWWGLSPALDLQAESPPVDPDSQADTVHSTPELDVLLLGSVDGRHLLRTLSRAKLWPRRRFNFFALENNLEAVARHMLIFSLALEDPEKMGLQERSETFLEVWGNALLRPPVAAFVRAQADLLAHLVPEPDRLEEQLPWLSLRALKFRERDALEAVFRFWAGGEKGPEAFPMSRLWDSRLRHYLGSRYDARHGVSDWDLRMKLHDRGAQVIHTQEFRRWRDTGVAFELRDSSAYHVPNRTLASGRLLSYRGERVAARGYWGDIATGPFVAFGIEADDESLLRTSNGQPVKTAGEITQHNVTELLREVAAWGRARASRGHPEEQQRSEASPEPGTPASTPESFTVHFLPLNSAETLHHKSCYNGRFQLLYVACGVVHLLSPELGACVAPGGNLIVELARYLVDMRQEQLQGFNTQVGERAQAAGFAPQTGARPSETFARFCKSQDSALGSTDPAVEPGTPSLDVLAQPLEASSPAPEGLTQPLQGGTPHWEPCQLPSESPGSLSEVLAQPQGALALSNCESHSNTGV.

Disordered stretches follow at residues 328–355 and 485–522; these read RASRGHPEEQQRSEASPEPGTPASTPES and SSPAPEGLTQPLQGGTPHWEPCQLPSESPGSLSEVLAQ.

This sequence belongs to the DNAAF3 family.

It localises to the cytoplasm. The protein resides in the dynein axonemal particle. In terms of biological role, required for the assembly of axonemal inner and outer dynein arms. Involved in preassembly of dyneins into complexes before their transport into cilia. This is Dynein axonemal assembly factor 3 (DNAAF3) from Macaca fascicularis (Crab-eating macaque).